The primary structure comprises 275 residues: MSACGRKALTLLSSVFAVCGLGLLGIAVSTDYWLYLEEGVIVPQNQSTEIKMSLHSGLWRVCFLAGEERGRCFTIEYVMPMNTQLTSESTVNVLKMIRSATPFPLVSLFFMFIGFILNNIGHIRPHRTILAFVSGIFFILSGLSLVVGLVLYISSINDEMLNRTKDAETYFNYKYGWSFAFAAISFLLTESAGVMSVYLFMKRYTAEDMYRPHPGFYRPRLSNCSDYSGQFLHPDAWVRGRSPSDISSEASLQMNSNYPALLKCPDYDQMSSSPC.

The next 4 membrane-spanning stretches (helical) occupy residues 8–28, 103–123, 129–149, and 176–196; these read ALTL…GIAV, FPLV…IGHI, ILAF…VVGL, and GWSF…GVMS.

Belongs to the PMP-22/EMP/MP20 family. CACNG subfamily. As to quaternary structure, the L-type calcium channel is composed of five subunits: alpha-1, alpha-2/delta, beta and gamma. Acts as an auxiliary subunit for AMPA-selective glutamate receptors (AMPARs). Found in a complex with GRIA1, GRIA2, GRIA3, GRIA4, CNIH2, CNIH3, CACNG2, CACNG3, CACNG4, CACNG7 and CACNG8. Interacts with GRIA1, GRIA2, GRIA3 and GRIA4.

Its subcellular location is the membrane. It localises to the postsynaptic density membrane. In terms of biological role, regulates the gating properties of AMPA-selective glutamate receptors (AMPARs). Modulates their gating properties by accelerating their rates of activation, deactivation and desensitization. Displays subunit-specific AMPA receptor regulation. Shows specificity for GRIA1, GRIA4 and the long isoform of GRIA2. Thought to stabilize the calcium channel in an inactivated (closed) state. This chain is Voltage-dependent calcium channel gamma-5 subunit (CACNG5), found in Homo sapiens (Human).